The following is a 379-amino-acid chain: ATP phosphoribosyltransferase regulatory subunit (379 aa).

This sequence belongs to the class-II aminoacyl-tRNA synthetase family. HisZ subfamily. In terms of assembly, heteromultimer composed of HisG and HisZ subunits.

Its subcellular location is the cytoplasm. Its pathway is amino-acid biosynthesis; L-histidine biosynthesis; L-histidine from 5-phospho-alpha-D-ribose 1-diphosphate: step 1/9. Its function is as follows. Required for the first step of histidine biosynthesis. May allow the feedback regulation of ATP phosphoribosyltransferase activity by histidine. In Gluconobacter oxydans (strain 621H) (Gluconobacter suboxydans), this protein is ATP phosphoribosyltransferase regulatory subunit.